The primary structure comprises 422 residues: MELENKLKKVTLGHEEGFGAPCLKCKEKCEGFELHFWRKVCRNCKCGQEEHSILSNNEDDRKVGKLFEDTKYTALIAKLKTDGIPTYKRNVMILTSPVAAKKDVSINTVTYEWAPPVQNQALARRYMELIPKDKQPVAGSEGAQYRKKQLAKQLPAHDQDPSKCHELSPNEVKQMEQFVKKYKNEVLGVGDVKLPKEVEAQACGAGRSTNGSLSTLTTVKGTEDKVAAQKESTYYCFRCKENMREGDPAVYAERAGYDKLWHPSCFVCFTCNELLVDMIYFWKNGKLYCGRHYCDSEKPRCAGCDELIFSNEYTQAEGLNWHLKHFCCFDCDCVLAGEIYVMVNDKPVCKLCYVKNHAVSCQGCHNAIDPEVQRVSYNGFHWHAAPECFICSCCSKCLIGQKFMPIQGMVFCSVDCKKKMSS.

In terms of domain architecture, PET spans 92 to 199; it reads MILTSPVAAK…GDVKLPKEVE (108 aa). The disordered stretch occupies residues 135–165; sequence QPVAGSEGAQYRKKQLAKQLPAHDQDPSKCH. Basic and acidic residues predominate over residues 155-165; sequence PAHDQDPSKCH. 3 LIM zinc-binding domains span residues 234 to 299, 300 to 359, and 360 to 422; these read YYCF…SEKP, RCAG…NHAV, and SCQG…KMSS.

It belongs to the prickle / espinas / testin family.

It localises to the cytoplasm. Its subcellular location is the cell cortex. It is found in the cell junction. The protein resides in the focal adhesion. Scaffold protein that may play a role in cell adhesion, cell spreading and in the reorganization of the actin cytoskeleton. May inhibit cell growth. Regulates cranial neural crest migration. Acts together with prickle1 to control axial elongation. The sequence is that of Testin from Xenopus tropicalis (Western clawed frog).